Reading from the N-terminus, the 323-residue chain is Rhazimal reductase 2 (323 aa).

Asp53 contributes to the NADP(+) binding site. The active-site Proton donor is Tyr58. Residues 167-168 (SN), Gln189, 215-220 (WSPLLS), and 289-297 (DQIQQIPQR) each bind NADP(+).

It belongs to the aldo/keto reductase family. In terms of assembly, monomer.

It catalyses the reaction rhazimol + NADP(+) = rhazimal + NADPH + 2 H(+). The protein operates within alkaloid biosynthesis. Oxidoreductase involved in the biosynthesis of akuammilan monoterpene indole alkaloids (MIAs) natural products, components with various biological properties such as antidiabetic, antibacterial, anti-inflammatory, anticancer, and antimalarial activities. Catalyzes the conversion of rhazimal to rhazimol. The chain is Rhazimal reductase 2 from Alstonia scholaris (Dogbane).